The chain runs to 399 residues: MIITSLLDTDLYKFTMMQVVLHHFPAANVEYRFRCRTPGVDLVPYIDEIRDEVRGLCSLRFADVELDYLRRMRFIKSDFVDFLALFHLNEKYISITPSPKGNGEIDIVIEGPWLHTILFEIPVLAIVNEVYFRNTQREPDYREGRERLREKIKLLGAKPEFADCKIADYGTRRRFSKVWHEEVALTLRDGLGPQFAGTSNVLYAMKHDITPLGTMAHEYLQACQALGPRLRDSQIYGFEMWAKEYRGDLGIALSDVYGMDAFLNDFDMYFCKLFDGARHDSGDPFEWGERMLRHYEANRCDPRTKVLVFSDALDIPKVMQLYERFRGRCKLAFGVGTNLTNDLGYVPLQIVIKMVRCNGQPVAKLSDSPGKSMCDDKAYLAYLRQVFGIAQPVDEDASK.

His217 carries the post-translational modification Phosphohistidine; by autocatalysis.

Belongs to the NAPRTase family. Post-translationally, transiently phosphorylated on a His residue during the reaction cycle. Phosphorylation strongly increases the affinity for substrates and increases the rate of nicotinate D-ribonucleotide production. Dephosphorylation regenerates the low-affinity form of the enzyme, leading to product release.

It catalyses the reaction nicotinate + 5-phospho-alpha-D-ribose 1-diphosphate + ATP + H2O = nicotinate beta-D-ribonucleotide + ADP + phosphate + diphosphate. Its pathway is cofactor biosynthesis; NAD(+) biosynthesis; nicotinate D-ribonucleotide from nicotinate: step 1/1. Functionally, catalyzes the synthesis of beta-nicotinate D-ribonucleotide from nicotinate and 5-phospho-D-ribose 1-phosphate at the expense of ATP. This Burkholderia cenocepacia (strain HI2424) protein is Nicotinate phosphoribosyltransferase.